A 347-amino-acid chain; its full sequence is Phenylalanine--tRNA ligase alpha subunit (347 aa).

E261 contacts Mg(2+).

It belongs to the class-II aminoacyl-tRNA synthetase family. Phe-tRNA synthetase alpha subunit type 1 subfamily. Tetramer of two alpha and two beta subunits. Mg(2+) is required as a cofactor.

The protein localises to the cytoplasm. It carries out the reaction tRNA(Phe) + L-phenylalanine + ATP = L-phenylalanyl-tRNA(Phe) + AMP + diphosphate + H(+). This chain is Phenylalanine--tRNA ligase alpha subunit, found in Streptococcus thermophilus (strain CNRZ 1066).